Consider the following 20-residue polypeptide: Collagenolytic protease 36 kDa A (20 aa).

The region spanning 1-20 (IVGGTEVTPGEIPYQLSLQD) is the Peptidase S1 domain. Positions 1–20 (IVGGTEVTPGEIPYQLSLQD) are disordered.

The protein belongs to the peptidase S1 family.

The enzyme catalyses Hydrolysis of proteins, with broad specificity for peptide bonds. Native collagen is cleaved about 75% of the length of the molecule from the N-terminus. Low activity on small molecule substrates of both trypsin and chymotrypsin.. Functionally, this enzyme is a serine protease capable of degrading the native triple helix of collagen. This is Collagenolytic protease 36 kDa A from Paralithodes camtschaticus (Red king crab).